A 126-amino-acid polypeptide reads, in one-letter code: Large ribosomal subunit protein bL17 (126 aa).

This sequence belongs to the bacterial ribosomal protein bL17 family. Part of the 50S ribosomal subunit. Contacts protein L32.

The protein is Large ribosomal subunit protein bL17 of Lysinibacillus sphaericus (strain C3-41).